Consider the following 148-residue polypeptide: U5-hexatoxin-Hi1a (148 aa).

An N-terminal signal peptide occupies residues 1-21; the sequence is MNFSVVAVALVVVLTVHFTDG. A propeptide spanning residues 22-38 is cleaved from the precursor; that stretch reads QETSSSLPSPPSPLPGR. The disordered stretch occupies residues 125–148; that stretch reads TPSTTVTTPTPTTETPTTETPSTP.

Contains 2 disulfide bonds. In terms of tissue distribution, expressed by the venom gland.

Its subcellular location is the secreted. Probable ion channel inhibitor. The protein is U5-hexatoxin-Hi1a of Hadronyche infensa (Fraser island funnel-web spider).